Consider the following 361-residue polypeptide: G2/mitotic-specific cyclin-B (361 aa).

It belongs to the cyclin family. Cyclin AB subfamily.

Essential for the control of the cell cycle at the G2/M (mitosis) transition. Interacts with the CDC2 protein kinase to form MPF. G2/M cyclins accumulate steadily during G2 and are abruptly destroyed at mitosis. This Hydra vulgaris (Hydra) protein is G2/mitotic-specific cyclin-B.